The chain runs to 125 residues: CLAVATA3/ESR (CLE)-related protein ESR3 (125 aa).

Positions 1 to 26 (MASRMGMVAIMSLFVYAIVVPTSVNA) are cleaved as a signal peptide. The tract at residues 45–125 (QQQGGFIGHR…IGPPPLPDRY (81 aa)) is disordered. Hydroxyproline is present on residues Pro-75 and Pro-78. O-linked (Ara...) hydroxyproline glycosylation is present at Pro-78.

It belongs to the CLV3/ESR signal peptide family. Post-translationally, the O-glycosylation (arabinosylation) of the hydroxyproline Pro-78 enhances binding affinity of the ESR3p peptide for its receptor. As to expression, seed endosperm.

It localises to the secreted. It is found in the extracellular space. In terms of biological role, extracellular signal peptide that regulates cell fate. This is CLAVATA3/ESR (CLE)-related protein ESR3 from Zea mays (Maize).